Here is an 81-residue protein sequence, read N- to C-terminus: Small ribosomal subunit protein bS16 (81 aa).

This sequence belongs to the bacterial ribosomal protein bS16 family.

The sequence is that of Small ribosomal subunit protein bS16 from Alkaliphilus oremlandii (strain OhILAs) (Clostridium oremlandii (strain OhILAs)).